The chain runs to 499 residues: Endosomal/lysosomal proton channel TMEM175 (499 aa).

Residues 1 to 30 lie on the Cytoplasmic side of the membrane; that stretch reads MSRLQTEEQAVDSEGDSSLHRRNEEGTQSS. The disordered stretch occupies residues 1–30; it reads MSRLQTEEQAVDSEGDSSLHRRNEEGTQSS. Thr-6 is subject to Phosphothreonine. The chain crosses the membrane as a helical span at residues 31–53; sequence HRMLGFSDALLSIIATVMILPVT. Positions 32-38 match the RxxxFSD motif 1 motif; it reads RMLGFSD. Residues 54–74 lie on the Lumenal side of the membrane; the sequence is HTEISPEQQFDKSIQKLLATR. The tract at residues 55–60 is short helix H1-1; sequence TEISPE. Residues 62–68 are short helix H2-1; sequence QFDKSIQ. The chain crosses the membrane as a helical span at residues 75–97; that stretch reads IAVYLMTFLIVTVAWTAHTRLFQ. Residues 98–103 are Cytoplasmic-facing; that stretch reads VVGKID. The chain crosses the membrane as a helical span at residues 104 to 125; the sequence is DTLALLNLACMMTITLLPYTFS. Topologically, residues 126–135 are lumenal; the sequence is LMVTFPDVPL. A helical transmembrane segment spans residues 136–157; the sequence is GIFLFCVCVIAIGSVQAMIVGY. Residues 158-181 lie on the Cytoplasmic side of the membrane; it reads AFHFPHLLNPQIQCSTHRDLSRRH. Residues 182 to 202 traverse the membrane as a helical segment; that stretch reads ILHLVLRGPALCFVAAVFSLF. The Lumenal segment spans residues 203 to 207; it reads FFPLS. A helical membrane pass occupies residues 208–227; that stretch reads YLLMVTVIFLPHISKATTWC. The Cytoplasmic segment spans residues 228–254; sequence KDKLMGQRESPAHDMEPFSIDLHAPLS. A helical transmembrane segment spans residues 255-279; it reads KERVEAFSDGVYAIVATLLILDICE. Residues 257–263 carry the RxxxFSD motif 2 motif; sequence RVEAFSD. The Lumenal portion of the chain corresponds to 280 to 306; sequence DNVPDPKDVQEKFSGSLVAALGAYGPQ. The interval 285-293 is short helix H1-2; it reads PKDVQEKFS. The tract at residues 295 to 301 is short helix H2-2; the sequence is SLVAALG. A helical transmembrane segment spans residues 307 to 329; the sequence is FLAYFGSFATVGLLWFAHHSLFL. The Cytoplasmic segment spans residues 330–335; it reads HVRKAT. Residues 336–357 traverse the membrane as a helical segment; the sequence is QTMGLLNILSLAFVGGLPLAYQ. Residues 358–372 are Lumenal-facing; that stretch reads QTSAFARQPHDELER. A helical membrane pass occupies residues 373–393; it reads VRVSCAIIFFASIFQFAIWTT. Residues 394–413 lie on the Cytoplasmic side of the membrane; sequence ALLHQTETLQPAVQFGGQEH. The chain crosses the membrane as a helical span at residues 414–437; it reads AFMFAKLALYPCASLLAFAATCLL. Residues 438-439 lie on the Lumenal side of the membrane; sequence SR. The chain crosses the membrane as a helical span at residues 440–466; that stretch reads FSTAIFHLMQISVPFAFLLLRLLVRLA. Over 467 to 499 the chain is Cytoplasmic; the sequence is LAGLQVLRGLWPHHPQQDQSEPEAQSQLLPDPC.

Belongs to the TMEM175 family. In terms of assembly, homodimer. Interacts with AKT (AKT1, AKT2 or AKT3); leading to formation of the lysoK(GF) complex, which activates the channel. Interacts with LAMP1; inhibiting the proton channel activity of TMEM175. Interacts with LAMP2; inhibiting the proton channel activity of TMEM175.

The protein resides in the endosome membrane. Its subcellular location is the lysosome membrane. The enzyme catalyses H(+)(in) = H(+)(out). It carries out the reaction K(+)(in) = K(+)(out). Active at low pH (under pH 4.6): proton channel activity is activated by luminal side protons. Polyunsaturated fatty acids, such as arachidonic acid, also activate the channel activity. Proton channel activity is directly inhibited by LAMP1 or LAMP2, facilitating lysosomal acidification. Channel activity is activated following interaction with AKT (AKT1, AKT2 or AKT3): interaction promotes activation from closed to an open state. Activation by AKT is independent of AKT serine/threonine-protein kinase activity. Its function is as follows. Proton-activated proton channel that catalyzes proton efflux from endosomes and lysosomes to maintain a steady-state pH. Activated at low pH (under pH 4.6) by luminal side protons: selectively mediates lysosomal proton release from lysosomes, eliciting a proton leak that balances V-ATPase activity to maintain pH homeostasis. Regulation of lumenal pH stability is required for autophagosome-lysosome fusion. Also acts as a potassium channel at higher pH, regulating potassium conductance in endosomes and lysosomes. Constitutes the pore-forming subunit of the lysoK(GF) complex, a complex activated by extracellular growth factors. The lysoK(GF) complex is composed of TMEM175 and AKT (AKT1, AKT2 or AKT3), a major target of growth factor receptors: in the complex, TMEM175 channel is opened by conformational changes by AKT, leading to its activation. The lysoK(GF) complex is required to protect neurons against stress-induced damage. This is Endosomal/lysosomal proton channel TMEM175 from Mus musculus (Mouse).